We begin with the raw amino-acid sequence, 462 residues long: Sonic hedgehog protein (462 aa).

The signal sequence occupies residues 1 to 23 (MLLLARCLLLVLVSSLLVCSGLA). Cysteine 24 carries N-palmitoyl cysteine lipidation. The short motif at 32–38 (KRRHPKK) is the Cardin-Weintraub element. The Ca(2+) site is built by glutamate 89, glutamate 90, aspartate 95, threonine 125, glutamate 126, aspartate 129, and aspartate 131. Positions 140, 147, and 182 each coordinate Zn(2+). A lipid anchor (Cholesterol glycine ester) is attached at glycine 197. N-linked (GlcNAc...) asparagine glycosylation is present at asparagine 278. Disordered stretches follow at residues 279 to 302 (DSAT…LGPR) and 395 to 414 (TDRG…GRVA). Positions 283–292 (GEPEASSGSG) are enriched in low complexity. Residues 400 to 412 (DSGGGDRGGGGGR) are compositionally biased toward gly residues.

The protein belongs to the hedgehog family. In terms of assembly, multimer. As to quaternary structure, interacts with HHATL/GUP1 which negatively regulates HHAT-mediated palmitoylation of the SHH N-terminus. Interacts with BOC and CDON. Interacts with HHIP. Interacts with DISP1 via its cholesterol anchor. Interacts with SCUBE2. Interacts with glypican GPC3. In terms of processing, the C-terminal domain displays an autoproteolysis activity and a cholesterol transferase activity. Both activities result in the cleavage of the full-length protein and covalent attachment of a cholesterol moiety to the C-terminal of the newly generated N-terminal fragment (ShhN). Cholesterylation is required for the sonic hedgehog protein N-product targeting to lipid rafts and multimerization. ShhN is the active species in both local and long-range signaling, whereas the C-product (ShhC) is degraded in the endoplasmic reticulum. N-palmitoylation by HHAT of ShhN is required for sonic hedgehog protein N-product multimerization and full activity. It is a prerequisite for the membrane-proximal positioning and the subsequent shedding of this N-terminal peptide. Post-translationally, the lipidated N- and C-terminal peptides of ShhNp can be cleaved (shedding). The N-terminal palmitoylated peptide is cleaved at the Cardin-Weintraub (CW) motif site. The cleavage reduced the interactions with heparan sulfate. The cleavage is enhanced by SCUBE2.

It is found in the endoplasmic reticulum membrane. The protein resides in the golgi apparatus membrane. Its subcellular location is the secreted. It localises to the cell membrane. It catalyses the reaction glycyl-L-cysteinyl-[protein] + cholesterol + H(+) = [protein]-C-terminal glycyl cholesterol ester + N-terminal L-cysteinyl-[protein]. Its function is as follows. The C-terminal part of the sonic hedgehog protein precursor displays an autoproteolysis and a cholesterol transferase activity. Both activities result in the cleavage of the full-length protein into two parts (ShhN and ShhC) followed by the covalent attachment of a cholesterol moiety to the C-terminal of the newly generated ShhN. Both activities occur in the endoplasmic reticulum. Once cleaved, ShhC is degraded in the endoplasmic reticulum. In terms of biological role, the dually lipidated sonic hedgehog protein N-product (ShhNp) is a morphogen which is essential for a variety of patterning events during development. Induces ventral cell fate in the neural tube and somites. Involved in the patterning of the anterior-posterior axis of the developing limb bud. Essential for axon guidance. Binds to the patched (PTCH1) receptor, which functions in association with smoothened (SMO), to activate the transcription of target genes. In the absence of SHH, PTCH1 represses the constitutive signaling activity of SMO. This chain is Sonic hedgehog protein, found in Homo sapiens (Human).